The chain runs to 237 residues: LexA repressor (237 aa).

Residues 26-46 constitute a DNA-binding region (H-T-H motif); sequence FDEMKEALDLRSKSGIHRLIT. A disordered region spans residues 84 to 110; the sequence is GFSPSVIEGGAQPKPSSRDLAPARSSG. Residues Ser-158 and Lys-196 each act as for autocatalytic cleavage activity in the active site.

It belongs to the peptidase S24 family. In terms of assembly, homodimer.

It carries out the reaction Hydrolysis of Ala-|-Gly bond in repressor LexA.. Its function is as follows. Represses a number of genes involved in the response to DNA damage (SOS response), including recA and lexA. In the presence of single-stranded DNA, RecA interacts with LexA causing an autocatalytic cleavage which disrupts the DNA-binding part of LexA, leading to derepression of the SOS regulon and eventually DNA repair. This chain is LexA repressor, found in Parvibaculum lavamentivorans (strain DS-1 / DSM 13023 / NCIMB 13966).